Reading from the N-terminus, the 117-residue chain is Protein RALF-like 27 (117 aa).

The N-terminal stretch at 1-27 is a signal peptide; sequence MTKTFFSFSFFFTSSLLLLLAATSATA. Residues 28-71 constitute a propeptide, removed in mature form; that stretch reads STGNVTSGLRYDGCAPGDTVGECITATVEEEDEEGVEAVVRRIL. The N-linked (GlcNAc...) asparagine glycan is linked to N31. 2 disulfide bridges follow: C88/C96 and C107/C113.

This sequence belongs to the plant rapid alkalinization factor (RALF) family.

It is found in the secreted. Functionally, cell signaling peptide that may regulate plant stress, growth, and development. Mediates a rapid alkalinization of extracellular space by mediating a transient increase in the cytoplasmic Ca(2+) concentration leading to a calcium-dependent signaling events through a cell surface receptor and a concomitant activation of some intracellular mitogen-activated protein kinases. The sequence is that of Protein RALF-like 27 (RALFL27) from Arabidopsis thaliana (Mouse-ear cress).